Here is a 318-residue protein sequence, read N- to C-terminus: 2-oxoacid:ferredoxin oxidoreductase 1, subunit beta (318 aa).

Residues Cys18, Cys21, and Cys52 each contribute to the [4Fe-4S] cluster site. Residues 50-53 (IGCS) and His69 contribute to the thiamine diphosphate site. Asp94 is a Mg(2+) binding site. 95 to 96 (GD) provides a ligand contact to thiamine diphosphate. Positions 122 and 124 each coordinate Mg(2+). 126–127 (GL) lines the thiamine diphosphate pocket. Cys201 lines the [4Fe-4S] cluster pocket.

Heterodimer composed of an alpha and a beta subunit. [4Fe-4S] cluster serves as cofactor. It depends on thiamine diphosphate as a cofactor. The cofactor is Mg(2+).

It carries out the reaction a 2-oxocarboxylate + 2 oxidized [2Fe-2S]-[ferredoxin] + CoA = an acyl-CoA + 2 reduced [2Fe-2S]-[ferredoxin] + CO2 + H(+). Catalyzes the coenzyme A-dependent oxidative decarboxylation of different 2-oxoacids such as pyruvate, 2-oxobutyrate and glyoxylate to form their CoA derivatives. The chain is 2-oxoacid:ferredoxin oxidoreductase 1, subunit beta from Aeropyrum pernix (strain ATCC 700893 / DSM 11879 / JCM 9820 / NBRC 100138 / K1).